The following is a 911-amino-acid chain: Alpha-actinin-4 (911 aa).

The actin-binding stretch occupies residues 1-269; that stretch reads MVDYHAANQA…YVSSFYHAFS (269 aa). Positions 12–26 are interaction with VCL; it reads QYGPSSGGNGTGGGG. Positions 12 to 31 are disordered; sequence QYGPSSGGNGTGGGGGMGDY. Gly residues predominate over residues 16–29; the sequence is SSGGNGTGGGGGMG. Tyrosine 31 carries the phosphotyrosine modification. An interaction with VCL region spans residues 40-61; it reads RDLLLDPAWEKQQRKTFTAWCN. 2 consecutive Calponin-homology (CH) domains span residues 50-154 and 163-269; these read KQQR…LRFA and TSAK…HAFS. Positions 84–88 match the LXXLL motif motif; that stretch reads LMLLL. The segment at 108–126 is interaction with VCL; that stretch reads KINNVNKALDFIASKGVKL. The residue at position 114 (lysine 114) is an N6-acetyllysine. The polyphosphoinositide (PIP2)-binding stretch occupies residues 177-192; it reads TAPYKNVNVQNFHISW. Lysine 214 bears the N6-acetyllysine mark. Position 249 is a phosphothreonine (threonine 249). Spectrin repeat units follow at residues 293-403, 413-518, 528-639, and 649-752; these read HLME…WLLN, HLAE…ALEK, QLHL…ALLE, and HLRR…EVEN. N6-acetyllysine occurs at positions 592 and 625. Serine 696 carries the post-translational modification Phosphoserine. Residues 736 to 911 are mediates interaction with MICALL2; it reads WEQLLTTIAR…STALYGESDL (176 aa). EF-hand domains are found at residues 765-800 and 806-841; these read EQMQ…LGYD and QGDA…ETTD. Aspartate 778 is a binding site for Ca(2+). Residue lysine 779 is modified to N6-acetyllysine. Ca(2+) is bound by residues aspartate 780 and glutamate 789. Lysine 859 bears the N6-acetyllysine mark. Phosphoserine is present on serine 909.

The protein belongs to the alpha-actinin family. As to quaternary structure, homodimer; antiparallel. Interacts with MAGI1. Interacts with MICALL2 (preferentially in opened conformation); stimulated by RAB13 activation. Identified in a IGF2BP1-dependent mRNP granule complex containing untranslated mRNAs. Component of the CART complex, at least composed of ACTN4, HGS/HRS, MYO5B and TRIM3. Binds TRIM3 at the N-terminus. Interacts with PDLIM2. Identified in a complex with CASK, IQGAP1, MAGI2, NPHS1, SPTAN1 and SPTBN1. Interacts with PPARG and RARA. Binds to VCL; this interaction triggers VCL conformational changes. Interacts with SEPTIN14. Interacts with IGSF8. Expressed in the foot process layer of podocytes in the kidney glomerulus but not in tubules (at protein level).

The protein localises to the nucleus. It is found in the cytoplasm. It localises to the cell junction. Its subcellular location is the cytoskeleton. The protein resides in the stress fiber. The protein localises to the perinuclear region. F-actin cross-linking protein which is thought to anchor actin to a variety of intracellular structures. This is a bundling protein. Probably involved in vesicular trafficking via its association with the CART complex. The CART complex is necessary for efficient transferrin receptor recycling but not for EGFR degradation. Involved in tight junction assembly in epithelial cells probably through interaction with MICALL2. Links MICALL2 to the actin cytoskeleton and recruits it to the tight junctions. May also function as a transcriptional coactivator, stimulating transcription mediated by the nuclear hormone receptors PPARG and RARA. Association with IGSF8 regulates the immune synapse formation and is required for efficient T-cell activation. The chain is Alpha-actinin-4 from Rattus norvegicus (Rat).